The chain runs to 26 residues: Conotoxin Eb6.17 (26 aa).

2 disulfide bridges follow: C7-C18 and C13-C25.

This sequence belongs to the conotoxin O1 superfamily. Expressed by the venom duct.

It is found in the secreted. This is Conotoxin Eb6.17 (E1) from Conus ebraeus (Hebrew cone).